Consider the following 337-residue polypeptide: Large ribosomal subunit protein uL3 (337 aa).

The segment at 1–32 (MAKGHRPRRGSLAYSPRKRSQSHIPRFRSWPE) is disordered.

Belongs to the universal ribosomal protein uL3 family. Part of the 50S ribosomal subunit. Forms a cluster with proteins L14 and L24e.

One of the primary rRNA binding proteins, it binds directly near the 3'-end of the 23S rRNA, where it nucleates assembly of the 50S subunit. This Methanococcoides burtonii (strain DSM 6242 / NBRC 107633 / OCM 468 / ACE-M) protein is Large ribosomal subunit protein uL3.